Consider the following 141-residue polypeptide: Large ribosomal subunit protein uL16 (141 aa).

Residues 1 to 23 form a disordered region; the sequence is MLMPKRTKWRKQQKGRNRGKSFR.

This sequence belongs to the universal ribosomal protein uL16 family. In terms of assembly, part of the 50S ribosomal subunit.

Functionally, binds 23S rRNA and is also seen to make contacts with the A and possibly P site tRNAs. This Sulfurovum sp. (strain NBC37-1) protein is Large ribosomal subunit protein uL16.